A 132-amino-acid polypeptide reads, in one-letter code: Small ribosomal subunit protein uS8 (132 aa).

Belongs to the universal ribosomal protein uS8 family. Part of the 30S ribosomal subunit. Contacts proteins S5 and S12.

Its function is as follows. One of the primary rRNA binding proteins, it binds directly to 16S rRNA central domain where it helps coordinate assembly of the platform of the 30S subunit. This is Small ribosomal subunit protein uS8 from Streptococcus agalactiae serotype V (strain ATCC BAA-611 / 2603 V/R).